Reading from the N-terminus, the 276-residue chain is NADH-cytochrome b5 reductase 2 (276 aa).

In terms of domain architecture, FAD-binding FR-type spans 15–127 (EAKYPLPLIE…RGPTGRLFYN (113 aa)). Lys-17 carries the N6-acetyllysine modification. The residue at position 18 (Tyr-18) is a Phosphotyrosine. FAD contacts are provided by residues 107-137 (ENMKIGDTILFRGPTGRLFYNEPGTLLIKTD) and 146-181 (LVHHLGMIAGGTGITPMLQLIRHITKDTSDGTRMSL).

The protein belongs to the flavoprotein pyridine nucleotide cytochrome reductase family. The cofactor is FAD.

The catalysed reaction is 2 Fe(III)-[cytochrome b5] + NADH = 2 Fe(II)-[cytochrome b5] + NAD(+) + H(+). Functionally, NADH-cytochrome b5 reductases are involved in desaturation and elongation of fatty acids, cholesterol biosynthesis, drug metabolism, and, in erythrocyte, methemoglobin reduction. Responsible for NADH-dependent lucigenin chemiluminescence in spermatozoa by reducing both lucigenin and 2-[4-iodophenyl]-3-[4-nitrophenyl]-5-[2,4-disulfophenyl]-2H tetrazolium monosodium salt (WST-1). The protein is NADH-cytochrome b5 reductase 2 (Cyb5r2) of Rattus norvegicus (Rat).